Here is a 101-residue protein sequence, read N- to C-terminus: Urease subunit beta (101 aa).

It belongs to the urease beta subunit family. As to quaternary structure, heterotrimer of UreA (gamma), UreB (beta) and UreC (alpha) subunits. Three heterotrimers associate to form the active enzyme.

Its subcellular location is the cytoplasm. It catalyses the reaction urea + 2 H2O + H(+) = hydrogencarbonate + 2 NH4(+). It participates in nitrogen metabolism; urea degradation; CO(2) and NH(3) from urea (urease route): step 1/1. This Paraburkholderia phytofirmans (strain DSM 17436 / LMG 22146 / PsJN) (Burkholderia phytofirmans) protein is Urease subunit beta.